Here is a 676-residue protein sequence, read N- to C-terminus: Probable LRR receptor-like serine/threonine-protein kinase At4g31250 (676 aa).

An N-terminal signal peptide occupies residues 1 to 26; that stretch reads MTRDDKFPIVYSLLLIVLLFVSPIYG. Residues 27 to 242 are Extracellular-facing; it reads DGDADALLKF…LLPCRYTRPP (216 aa). Residues Asn-42, Asn-73, and Asn-83 are each glycosylated (N-linked (GlcNAc...) asparagine). LRR repeat units lie at residues 98 to 122, 123 to 146, 148 to 171, 172 to 195, and 197 to 218; these read IRGL…IDGL, VSLA…LFSG, KALL…LGKL, PKLT…KQKN, and VTVN…GLMN. Asn-218 carries an N-linked (GlcNAc...) asparagine glycan. The helical transmembrane segment at 243–263 threads the bilayer; sequence FFTVFLLALTILAVVVLITVF. The Cytoplasmic segment spans residues 264–676; the sequence is LSVCILSRRQ…RAMTEEFSLM (413 aa). The segment covering 319 to 330 has biased composition (polar residues); it reads TVQRDSTATSGA. Residues 319–347 are disordered; it reads TVQRDSTATSGAISVGGLSPDEDKRGDQR. Residues 366–640 enclose the Protein kinase domain; that stretch reads RASAEVLGSG…HEAVDRIEEV (275 aa). The residue at position 368 (Ser-368) is a Phosphoserine. ATP is bound by residues 372 to 380 and Lys-394; that span reads LGSGGFGSS. Ser-446 and Ser-543 each carry phosphoserine. Residues 641–676 are disordered; sequence DRDAGGGQESVRSSYVTASDGDHRSSRAMTEEFSLM.

Belongs to the protein kinase superfamily. Ser/Thr protein kinase family.

It localises to the membrane. It catalyses the reaction L-seryl-[protein] + ATP = O-phospho-L-seryl-[protein] + ADP + H(+). It carries out the reaction L-threonyl-[protein] + ATP = O-phospho-L-threonyl-[protein] + ADP + H(+). The polypeptide is Probable LRR receptor-like serine/threonine-protein kinase At4g31250 (Arabidopsis thaliana (Mouse-ear cress)).